A 685-amino-acid chain; its full sequence is MAMKARLESVLNVGLRIPSIMLLEVLYRWDVSSFFQKIQRSSLNNNPVFQYKYIALYLHYVGYILSLVLLTLPRQHLVQLYLYVLTALLLFAGHQLSRDYVRGELDSGYEGPLYLEPLSMNRFTTALIGQVVVCTLCSCVMQTRQIWLFSAHLLPLVARLCLVPLETIVFINRFAMIFTGLEVLYFIASNLLVPYNLAKTAYRELVQVVEVYGLLALGMSLWNQLVLPVLFMCFWLVLFALQIYTYFSTRDQPPSRERLLFLFLTSIAECCSTPYSLLGLVFTVSFVALGVLTLCKFYLQGYRAFMNDNAMHRGMTEGITLLILAVQTGLIELQVIHRAFLLSIILFIVVASILQSMLEIADPIVLALGASRDKSLWKHFRAVSLCLFLLVFPAYMAYMICQFFRMDFWLLIIISSSILTSLQVLGTLLIYVLFMVEEFRKAPVENMDEVIYYVNGTYRLLEFLVAVCVVAYGVSETLFGEWTVMGSTIILVHSYYNVWLRAQLGWQSFLLRRDAVHKIQSMPTASTLQLQQHNDICSICFQDMKSAVITPCSHFFHAACLKKWLYVQETCPLCHGQLKSQLQPTSSPGTPTQGTPAANQNPREVEQEQRQPQVELNTEEGIRAEEMKTSAEQKLGMDLLPGSLNTQPKECDLVAEGSAGTASNLKGDDYYDDDDVSTSDVNCAS.

The next 13 helical transmembrane spans lie at 53–73 (YIALYLHYVGYILSLVLLTLP), 77–97 (LVQLYLYVLTALLLFAGHQLS), 123–143 (FTTALIGQVVVCTLCSCVMQT), 151–171 (AHLLPLVARLCLVPLETIVFI), 174–194 (FAMIFTGLEVLYFIASNLLVP), 225–245 (LVLPVLFMCFWLVLFALQIYT), 275–295 (YSLLGLVFTVSFVALGVLTLC), 316–336 (TEGITLLILAVQTGLIELQVI), 340–360 (FLLSIILFIVVASILQSMLEI), 384–404 (SLCLFLLVFPAYMAYMICQFF), 410–430 (LLIIISSSILTSLQVLGTLLI), 460–480 (LLEFLVAVCVVAYGVSETLFG), and 482–502 (WTVMGSTIILVHSYYNVWLRA). An RING-type; atypical zinc finger spans residues 537-575 (CSICFQDMKSAVITPCSHFFHAACLKKWLYVQETCPLCH). The disordered stretch occupies residues 582–685 (LQPTSSPGTP…VSTSDVNCAS (104 aa)). A compositionally biased stretch (low complexity) spans 583 to 602 (QPTSSPGTPTQGTPAANQNP). The segment covering 620-631 (EGIRAEEMKTSA) has biased composition (basic and acidic residues).

The protein resides in the membrane. The chain is RING finger protein 145 (rnf145) from Danio rerio (Zebrafish).